The following is a 508-amino-acid chain: MLPLLDSVSLPYLILSACLSVILLRRFLAHDKGGSKSIAQGCLPEPRLRQWDPIFGFGIVISQARALRGHRYLEWLRDLHASMPHTKTFSANYGGYRWIFSIEPEILKAVYATNLQNFGVEPIRQHPPGFQPFAHKGVSTSDGDDWSFSRTLIKPFFERSVYISTDRIKPFADKFMTLLPDDGETFDIQPLLQRWFLDITSEFIFGKSQDSMTHADRAEVTWAMADVLRGGRQRAQTHRILWAFNWDWWFEAVEKVHGFLNPYIRSTLKELEERQQRIKDGLPVDEERTDLLWSMATMLPDEEELRSQVCLIFVPNNDTTSMFIGHCLYFLARNSNAWKRLRDEVDAVGDAPITFEMLRNMKYLNGILNETHRLIPNNVTQVRAALSDVVLPLGGGPNGKAPLDVRKGDIVSVTKTVMYRDPEQWGPDANEYRPERWDGMRGGWHFLPYGGGPRRCPAQMMVQNESAYMLFRLAQKYSTIVARDPEPFRARMRIGPSSMHGVKIAFYK.

A helical transmembrane segment spans residues 8–24 (VSLPYLILSACLSVILL). C456 contributes to the heme binding site.

This sequence belongs to the cytochrome P450 family. Requires heme as cofactor.

It localises to the membrane. Its pathway is secondary metabolite biosynthesis. Its function is as follows. Cytochrome P450 monooxygenase; part of the gene cluster that mediates the biosynthesis of tenellin-type 2-pyridones, iron-chelating compounds involved in iron stress tolerance, competition with the natural competitor fungus Metarhizium robertsii and insect hosts infection. TenA catalyzes an oxidative ring expansion of pretenellin A and 14-hydropretellenin A to form the 2-pyridone core, leading to the production of pretenellin B and pyridovericin, respectively. The pathway begins with the assembly of the polyketide-amino acid backbone by the hybrid PKS-NRPS tenS with the help of the enoyl reductase tenC. These enzymes catalyze the synthesis of the pyrrolidine-2-dione intermediates pretellinin A, 11-hydropretellenin A, 12-hydropretellenin A, 13-hydropretellenin A, 14-hydropretellenin A, 12-oxopretellenin A and prototellinin D. The cytochrome P450 monooxygenase tenA then catalyzes an oxidative ring expansion of pretenellin A and 14-hydropretellenin A to form the 2-pyridone core, leading to pretenellin B and pyridovericin, respectively. The cytochrome P450 monooxygenase tenB is then required for the selective N-hydroxylation of the 2-pyridone nitrogen of yield tellinin and 15-hydroxytellenin (15-HT), respectively. The UDP-glucosyltransferase GT1 and the methyltransferase MT1, located outside the tenS gene cluster, contribute to the stepwise glycosylation and methylation of 15-HT to obtain the glycoside pyridovericin-N-O-(4-O-methyl-beta-D-glucopyranoside) (PMGP). Additional related compounds such as 1-O-methyl-15-HT, (8Z)-1-O-methyl-15-HT, and O-methyltenellin A are also produced but the enzymes involved in their biosynthesis have still to be determined. This chain is Cytochrome P450 monooxygenase tenA, found in Beauveria bassiana (White muscardine disease fungus).